Here is an 827-residue protein sequence, read N- to C-terminus: Periplasmic nitrate reductase (827 aa).

The segment at residues 1-32 (MTLSRRAFIKQTAAATAASAAGVVLPGVDALA) is a signal peptide (tat-type signal). The region spanning 37-93 (LTWSKAPCRFCGTGCGVSVGVKNGKVVATQGDPQAEVNRGLNCVKGYFLSKIMYGQD) is the 4Fe-4S Mo/W bis-MGD-type domain. C44, C47, C51, and C79 together coordinate [4Fe-4S] cluster. Residues K81, Q148, N173, C177, 241 to 245 (STFEH), 260 to 262 (QSD), M371, Q375, N481, 507 to 508 (SD), K530, D557, and 717 to 726 (TGRVLEHWHS) contribute to the Mo-bis(molybdopterin guanine dinucleotide) site. W793 provides a ligand contact to substrate. Residues N801 and K818 each contribute to the Mo-bis(molybdopterin guanine dinucleotide) site.

The protein belongs to the prokaryotic molybdopterin-containing oxidoreductase family. NasA/NapA/NarB subfamily. As to quaternary structure, component of the periplasmic nitrate reductase NapAB complex composed of NapA and NapB. Requires [4Fe-4S] cluster as cofactor. The cofactor is Mo-bis(molybdopterin guanine dinucleotide). Post-translationally, predicted to be exported by the Tat system. The position of the signal peptide cleavage has not been experimentally proven.

It localises to the periplasm. The enzyme catalyses 2 Fe(II)-[cytochrome] + nitrate + 2 H(+) = 2 Fe(III)-[cytochrome] + nitrite + H2O. Its function is as follows. Catalytic subunit of the periplasmic nitrate reductase complex NapAB. Receives electrons from NapB and catalyzes the reduction of nitrate to nitrite. In Paraburkholderia xenovorans (strain LB400), this protein is Periplasmic nitrate reductase.